The following is a 360-amino-acid chain: Protein phosphatase 1L (360 aa).

Residues 1–25 (MIEDTMTLLSLLGRIMRYFLLRPET) are Extracellular-facing. Residues 26–42 (LFLLCISLALWSYFFHT) traverse the membrane as a helical segment. The Cytoplasmic portion of the chain corresponds to 43 to 360 (DEVKTIVKSS…FRNSSKTEEQ (318 aa)). The PPM-type phosphatase domain occupies 92 to 351 (NVAVYSIQGR…DNITVMVVKF (260 aa)). The Mn(2+) site is built by Asp128, Gly129, Asp302, and Asp342.

The protein belongs to the PP2C family. As to quaternary structure, interacts with MAP3K7/TAK1. Interacts with MAP3K5. Mg(2+) is required as a cofactor. The cofactor is Mn(2+). Ubiquitous. Highly expressed in heart, placenta, lung, liver, kidney and pancreas.

Its subcellular location is the membrane. The enzyme catalyses O-phospho-L-seryl-[protein] + H2O = L-seryl-[protein] + phosphate. It catalyses the reaction O-phospho-L-threonyl-[protein] + H2O = L-threonyl-[protein] + phosphate. Functionally, acts as a suppressor of the SAPK signaling pathways by associating with and dephosphorylating MAP3K7/TAK1 and MAP3K5, and by attenuating the association between MAP3K7/TAK1 and MAP2K4 or MAP2K6. The chain is Protein phosphatase 1L (PPM1L) from Homo sapiens (Human).